A 185-amino-acid polypeptide reads, in one-letter code: Elongation factor P (185 aa).

The protein belongs to the elongation factor P family.

The protein resides in the cytoplasm. It participates in protein biosynthesis; polypeptide chain elongation. Involved in peptide bond synthesis. Stimulates efficient translation and peptide-bond synthesis on native or reconstituted 70S ribosomes in vitro. Probably functions indirectly by altering the affinity of the ribosome for aminoacyl-tRNA, thus increasing their reactivity as acceptors for peptidyl transferase. The chain is Elongation factor P from Anoxybacillus flavithermus (strain DSM 21510 / WK1).